A 417-amino-acid chain; its full sequence is Histidinol-phosphate aminotransferase 1, chloroplastic (417 aa).

The transit peptide at 1–40 (MGVINVQGSPSFSIHSSESNLRKSRALKKPFCSIRNRVYC) directs the protein to the chloroplast. A41 is modified (N-acetylalanine). Position 277 is an N6-(pyridoxal phosphate)lysine (K277).

Belongs to the class-II pyridoxal-phosphate-dependent aminotransferase family. Histidinol-phosphate aminotransferase subfamily. Homodimer. It depends on pyridoxal 5'-phosphate as a cofactor. In terms of tissue distribution, expressed in both vegetative and reproductive tissues.

The protein resides in the plastid. The protein localises to the chloroplast. It carries out the reaction L-histidinol phosphate + 2-oxoglutarate = 3-(imidazol-4-yl)-2-oxopropyl phosphate + L-glutamate. The protein operates within amino-acid biosynthesis; L-histidine biosynthesis; L-histidine from 5-phospho-alpha-D-ribose 1-diphosphate: step 7/9. This is Histidinol-phosphate aminotransferase 1, chloroplastic (HISN6A) from Arabidopsis thaliana (Mouse-ear cress).